The chain runs to 325 residues: MDVFDYEDVQLIPNKCIVKSRSEIDTTVRFGSETFKIPVVPANMQTIIDEPLAIWLAENHYFYVMHRFQPEKRPAFIKMMHERNLFASISVGVKDDEFDFINQLAQDNLIPEYITIDIAHGHSQVVIDMIQHIKKVLPKSFVIAGNVGTPEAVRDLERAGADATKVGIGPGKVCITKIKTGFGTGGWQLGALRWCAKAATKPIIADGGIRTNGDIAKSIRFGANMVMIGSLFAGHTESPGELVEEDGQQFKEYFGSASEFQKGTHQNVEGKRILVPYKGSISDTLTEMRQDLQSSISYAGGKRLSALRKVDYVLVRHSIFNGDML.

Cys174 serves as the catalytic Thioimidate intermediate. Residue 203–226 (IIADGGIRTNGDIAKSIRFGANMV) participates in NADP(+) binding.

Belongs to the IMPDH/GMPR family. GuaC type 2 subfamily.

It catalyses the reaction IMP + NH4(+) + NADP(+) = GMP + NADPH + 2 H(+). In terms of biological role, catalyzes the irreversible NADPH-dependent deamination of GMP to IMP. It functions in the conversion of nucleobase, nucleoside and nucleotide derivatives of G to A nucleotides, and in maintaining the intracellular balance of A and G nucleotides. The chain is GMP reductase from Latilactobacillus sakei subsp. sakei (strain 23K) (Lactobacillus sakei subsp. sakei).